The sequence spans 362 residues: Peptide chain release factor 1 (362 aa).

N5-methylglutamine is present on Gln237. A compositionally biased stretch (basic and acidic residues) spans 285 to 295 (EEKRHAEEAST). A disordered region spans residues 285-311 (EEKRHAEEASTRRNLLGSGDRSDRIRT).

The protein belongs to the prokaryotic/mitochondrial release factor family. Post-translationally, methylated by PrmC. Methylation increases the termination efficiency of RF1.

The protein resides in the cytoplasm. Functionally, peptide chain release factor 1 directs the termination of translation in response to the peptide chain termination codons UAG and UAA. The protein is Peptide chain release factor 1 of Photobacterium profundum (strain SS9).